The primary structure comprises 186 residues: Putative adenylate kinase (186 aa).

ATP contacts are provided by G10, G12, K13, T14, and S15. Residues 30–53 (HLNELIKEEHLYTEVDEKRDSVVA) form an NMP region. The LID stretch occupies residues 108 to 118 (KRGYSEEKVNE). R109 provides a ligand contact to ATP.

It belongs to the adenylate kinase family. AK6 subfamily. Interacts with uS11. Not a structural component of 40S pre-ribosomes, but transiently interacts with them by binding to uS11.

The catalysed reaction is AMP + ATP = 2 ADP. The enzyme catalyses ATP + H2O = ADP + phosphate + H(+). Its function is as follows. Broad-specificity nucleoside monophosphate (NMP) kinase that catalyzes the reversible transfer of the terminal phosphate group between nucleoside triphosphates and monophosphates. Also has ATPase activity. Involved in the late maturation steps of the 30S ribosomal particles, specifically 16S rRNA maturation. While NMP activity is not required for ribosome maturation, ATPase activity is. Associates transiently with small ribosomal subunit protein uS11. ATP hydrolysis breaks the interaction with uS11. May temporarily remove uS11 from the ribosome to enable a conformational change of the ribosomal RNA that is needed for the final maturation step of the small ribosomal subunit. This Methanosarcina acetivorans (strain ATCC 35395 / DSM 2834 / JCM 12185 / C2A) protein is Putative adenylate kinase.